The primary structure comprises 185 residues: Small ribosomal subunit protein uS4c (185 aa).

One can recognise an S4 RNA-binding domain in the interval 72 to 134 (MRLDNVIFRL…PTSCNALKGE (63 aa)). The disordered stretch occupies residues 132 to 154 (KGESPGGGETPDHLTASLSEGSR).

This sequence belongs to the universal ribosomal protein uS4 family. In terms of assembly, part of the 30S ribosomal subunit. Contacts protein S5. The interaction surface between S4 and S5 is involved in control of translational fidelity.

It is found in the plastid. The protein resides in the chloroplast. In terms of biological role, one of the primary rRNA binding proteins, it binds directly to 16S rRNA where it nucleates assembly of the body of the 30S subunit. Functionally, with S5 and S12 plays an important role in translational accuracy. In Woodwardia unigemmata (Chainfern), this protein is Small ribosomal subunit protein uS4c (rps4).